We begin with the raw amino-acid sequence, 344 residues long: Ig alpha chain C region (344 aa).

Residues 6–99 (PTIYPLTLPP…SNPVQELDVN (94 aa)) enclose the Ig-like 1 domain. Cystine bridges form between Cys26–Cys84 and Cys76–Cys100. Asn38 and Asn99 each carry an N-linked (GlcNAc...) asparagine glycan. O-linked (GalNAc) serine; in variant MOPC 47A glycosylation occurs at Ser101. Disulfide bonds link Cys114–Cys171 and Cys138–Cys195. 2 consecutive Ig-like domains span residues 116–206 (PSLS…GTLT) and 219–321 (PQVH…KTID). Asn329 carries an N-linked (GlcNAc...) asparagine glycan. N-linked (GlcNAc...) asparagine; in variant M511 glycosylation is present at Ser331.

Ig alpha is the major immunoglobulin class in body secretions. It may serve both to defend against local infection and to prevent access of foreign antigens to the general immunologic system. This chain is Ig alpha chain C region, found in Mus musculus (Mouse).